The chain runs to 235 residues: Exotoxin type C (235 aa).

The signal sequence occupies residues 1–27 (MKKINIIKIVFIITVILISTISPIIKS). 3 residues coordinate Zn(2+): His194, His228, and Asp230.

Belongs to the staphylococcal/streptococcal toxin family.

In terms of biological role, superantigen that acts as a causative agent of the symptoms associated with scarlet fever. Has been associated with streptococcal toxic shock-like disease and may play a role in the early events of rheumatic fever. Superantigens cross-link major histocompatibility complex (MHC) class II and T-cell receptor (TCR) molecules, resulting in an overstimulation of T-cells associated with a massive release of pyrogenic and inflammatory cytokines. The chain is Exotoxin type C from Streptococcus pyogenes serotype M18 (strain MGAS8232).